A 270-amino-acid chain; its full sequence is Probable septum site-determining protein MinC (270 aa).

The interval 105–129 (DRRAPSSKAADEAPVQQAEPAAPAA) is disordered. Over residues 116 to 129 (EAPVQQAEPAAPAA) the composition is skewed to low complexity.

The protein belongs to the MinC family. Interacts with MinD and FtsZ.

In terms of biological role, cell division inhibitor that blocks the formation of polar Z ring septums. Rapidly oscillates between the poles of the cell to destabilize FtsZ filaments that have formed before they mature into polar Z rings. Prevents FtsZ polymerization. This is Probable septum site-determining protein MinC from Burkholderia mallei (strain NCTC 10247).